A 303-amino-acid polypeptide reads, in one-letter code: Oxygen-dependent coproporphyrinogen-III oxidase (303 aa).

Ser94 contributes to the substrate binding site. Residues His98 and His108 each contribute to the a divalent metal cation site. His108 functions as the Proton donor in the catalytic mechanism. Position 110–112 (110–112 (NVR)) interacts with substrate. Residues His147 and His177 each contribute to the a divalent metal cation site. An important for dimerization region spans residues 242–277 (YVEFNLVYDRGTLFGLQTGGRTESILMSLPPLVRWE). 260 to 262 (GGR) contacts substrate.

Belongs to the aerobic coproporphyrinogen-III oxidase family. As to quaternary structure, homodimer. The cofactor is a divalent metal cation.

The protein resides in the cytoplasm. The enzyme catalyses coproporphyrinogen III + O2 + 2 H(+) = protoporphyrinogen IX + 2 CO2 + 2 H2O. The protein operates within porphyrin-containing compound metabolism; protoporphyrin-IX biosynthesis; protoporphyrinogen-IX from coproporphyrinogen-III (O2 route): step 1/1. Its function is as follows. Involved in the heme biosynthesis. Catalyzes the aerobic oxidative decarboxylation of propionate groups of rings A and B of coproporphyrinogen-III to yield the vinyl groups in protoporphyrinogen-IX. The sequence is that of Oxygen-dependent coproporphyrinogen-III oxidase from Saccharophagus degradans (strain 2-40 / ATCC 43961 / DSM 17024).